Reading from the N-terminus, the 120-residue chain is Glycine cleavage system H protein (120 aa).

Residues 20–102 form the Lipoyl-binding domain; it reads DGTVGISDHA…YEGGWLFKLD (83 aa). Residue Lys-61 is modified to N6-lipoyllysine.

The protein belongs to the GcvH family. In terms of assembly, the glycine cleavage system is composed of four proteins: P, T, L and H. (R)-lipoate serves as cofactor.

Its function is as follows. The glycine cleavage system catalyzes the degradation of glycine. The H protein shuttles the methylamine group of glycine from the P protein to the T protein. The chain is Glycine cleavage system H protein from Deinococcus radiodurans (strain ATCC 13939 / DSM 20539 / JCM 16871 / CCUG 27074 / LMG 4051 / NBRC 15346 / NCIMB 9279 / VKM B-1422 / R1).